The sequence spans 339 residues: Phosphate acyltransferase (339 aa).

It belongs to the PlsX family. In terms of assembly, homodimer. Probably interacts with PlsY.

The protein resides in the cytoplasm. It carries out the reaction a fatty acyl-[ACP] + phosphate = an acyl phosphate + holo-[ACP]. The protein operates within lipid metabolism; phospholipid metabolism. Catalyzes the reversible formation of acyl-phosphate (acyl-PO(4)) from acyl-[acyl-carrier-protein] (acyl-ACP). This enzyme utilizes acyl-ACP as fatty acyl donor, but not acyl-CoA. The protein is Phosphate acyltransferase of Tolumonas auensis (strain DSM 9187 / NBRC 110442 / TA 4).